A 372-amino-acid chain; its full sequence is 3-isopropylmalate dehydrogenase (372 aa).

Position 79 to 90 (79 to 90 (GPKWQGGAVRPE)) interacts with NAD(+). Positions 97, 107, 136, and 225 each coordinate substrate. Mg(2+) contacts are provided by Asp225, Asp250, and Asp254. 289-300 (GSAPDLPAGKAN) is an NAD(+) binding site.

Belongs to the isocitrate and isopropylmalate dehydrogenases family. In terms of assembly, homodimer. Requires Mg(2+) as cofactor. Mn(2+) is required as a cofactor.

The protein localises to the cytoplasm. The enzyme catalyses (2R,3S)-3-isopropylmalate + NAD(+) = 4-methyl-2-oxopentanoate + CO2 + NADH. It participates in amino-acid biosynthesis; L-leucine biosynthesis; L-leucine from 3-methyl-2-oxobutanoate: step 3/4. Catalyzes the oxidation of 3-carboxy-2-hydroxy-4-methylpentanoate (3-isopropylmalate) to 3-carboxy-4-methyl-2-oxopentanoate. The product decarboxylates to 4-methyl-2 oxopentanoate. The sequence is that of 3-isopropylmalate dehydrogenase (LEU2) from Eremothecium gossypii (strain ATCC 10895 / CBS 109.51 / FGSC 9923 / NRRL Y-1056) (Yeast).